The chain runs to 124 residues: Small ribosomal subunit protein uS12 (124 aa).

Position 89 is a 3-methylthioaspartic acid (D89).

Belongs to the universal ribosomal protein uS12 family. Part of the 30S ribosomal subunit. Contacts proteins S8 and S17. May interact with IF1 in the 30S initiation complex.

Its function is as follows. With S4 and S5 plays an important role in translational accuracy. Interacts with and stabilizes bases of the 16S rRNA that are involved in tRNA selection in the A site and with the mRNA backbone. Located at the interface of the 30S and 50S subunits, it traverses the body of the 30S subunit contacting proteins on the other side and probably holding the rRNA structure together. The combined cluster of proteins S8, S12 and S17 appears to hold together the shoulder and platform of the 30S subunit. This is Small ribosomal subunit protein uS12 from Yersinia enterocolitica serotype O:8 / biotype 1B (strain NCTC 13174 / 8081).